The sequence spans 609 residues: UvrABC system protein C (609 aa).

The GIY-YIG domain maps to 19–97 (ASPGCYLWKS…IKKHNPRFNV (79 aa)). The region spanning 208–243 (ESLVSDLNIKMSNASERLDFEKAARYRDMLQRIQNF) is the UVR domain.

This sequence belongs to the UvrC family. As to quaternary structure, interacts with UvrB in an incision complex.

It is found in the cytoplasm. The UvrABC repair system catalyzes the recognition and processing of DNA lesions. UvrC both incises the 5' and 3' sides of the lesion. The N-terminal half is responsible for the 3' incision and the C-terminal half is responsible for the 5' incision. The protein is UvrABC system protein C of Leptospira interrogans serogroup Icterohaemorrhagiae serovar copenhageni (strain Fiocruz L1-130).